A 456-amino-acid polypeptide reads, in one-letter code: MRRKWRSEDFHFVFFGVLCLLLIDRGKLEQVKHSDTYCVFQDKKYRVGERWHPYLEPYGLVYCVNCLCSENGNVLCSRIRCPSLHCPSPVHVPQLCCPRCPEDSLFSVSSKITGKSCEYNGTTYHHGEMFVAEGLFQNRQANQCAQCSCSEGNVYCGLKTCPKLTCSFPVSVPESCCPVCRGDGELSWEQADGDIFRQPANREARHSYHRPHYELSPSSTRQVVNVPRFPSARSNRGVLPDPQQASGTIVQIVINNKHKHGRVCVSNGKTYSHGESWHPNLRAFGIVECVLCTCNITKQECKKIHCPEQYPCKYPQKVEGKCCKVCPEEVPSQSFDNKDYFCGKETFPVYESIFTEEGETIRKIAVETEKPPQIEIHVWTIRKGILRHFYIEKMSKREFEELPYFKQITRTTSSQWKIFSEGEAQISQMCESRVCRTELEDLVKVLYLEKSEKGHC.

The N-terminal stretch at M1 to L28 is a signal peptide. VWFC domains are found at residues T36–P101, K115–R181, and R262–P327. An N-linked (GlcNAc...) asparagine glycan is attached at N120. The Cell attachment site motif lies at R181–D183. N-linked (GlcNAc...) asparagine glycosylation occurs at N295.

As to expression, mainly expressed in the ventral retina.

The protein localises to the secreted. Functionally, seems to antagonize the function of BMP4 by binding to it and preventing its interaction with receptors. The protein is Chordin-like protein 1 (CHRDL1) of Gallus gallus (Chicken).